Here is a 305-residue protein sequence, read N- to C-terminus: Probable 2-methylisocitrate lyase 1 (305 aa).

52 to 54 (SGA) is a substrate binding site. Residues aspartate 91 and aspartate 93 each contribute to the Mg(2+) site. Residues 128–129 (CG), arginine 163, glutamate 193, 216–218 (NMT), arginine 247, and arginine 276 contribute to the substrate site.

This sequence belongs to the isocitrate lyase/PEP mutase superfamily. Methylisocitrate lyase family. Homotetramer; dimer of dimers. Mg(2+) is required as a cofactor.

The catalysed reaction is (2S,3R)-3-hydroxybutane-1,2,3-tricarboxylate = pyruvate + succinate. Its function is as follows. Catalyzes the thermodynamically favored C-C bond cleavage of (2R,3S)-2-methylisocitrate to yield pyruvate and succinate via an alpha-carboxy-carbanion intermediate. The protein is Probable 2-methylisocitrate lyase 1 of Corynebacterium glutamicum (strain ATCC 13032 / DSM 20300 / JCM 1318 / BCRC 11384 / CCUG 27702 / LMG 3730 / NBRC 12168 / NCIMB 10025 / NRRL B-2784 / 534).